Consider the following 548-residue polypeptide: Chaperonin GroEL 1 (548 aa).

ATP-binding positions include Thr-30 to Pro-33, Lys-51, Asp-87 to Thr-91, Gly-415, Asn-479 to Ala-481, and Asp-495.

It belongs to the chaperonin (HSP60) family. In terms of assembly, forms a cylinder of 14 subunits composed of two heptameric rings stacked back-to-back. Interacts with the co-chaperonin GroES.

It localises to the cytoplasm. The catalysed reaction is ATP + H2O + a folded polypeptide = ADP + phosphate + an unfolded polypeptide.. Together with its co-chaperonin GroES, plays an essential role in assisting protein folding. The GroEL-GroES system forms a nano-cage that allows encapsulation of the non-native substrate proteins and provides a physical environment optimized to promote and accelerate protein folding. The polypeptide is Chaperonin GroEL 1 (Anaeromyxobacter dehalogenans (strain 2CP-C)).